Consider the following 86-residue polypeptide: Large ribosomal subunit protein bL31B (86 aa).

This sequence belongs to the bacterial ribosomal protein bL31 family. Type B subfamily. As to quaternary structure, part of the 50S ribosomal subunit.

This Streptococcus pyogenes serotype M1 protein is Large ribosomal subunit protein bL31B.